The following is a 194-amino-acid chain: Orotate phosphoribosyltransferase (194 aa).

Position 117–125 (117–125) interacts with 5-phospho-alpha-D-ribose 1-diphosphate; that stretch reads EDVVTTGLS. Orotate contacts are provided by Thr121 and Arg149.

The protein belongs to the purine/pyrimidine phosphoribosyltransferase family. PyrE subfamily. In terms of assembly, homodimer. Mg(2+) is required as a cofactor.

It catalyses the reaction orotidine 5'-phosphate + diphosphate = orotate + 5-phospho-alpha-D-ribose 1-diphosphate. The protein operates within pyrimidine metabolism; UMP biosynthesis via de novo pathway; UMP from orotate: step 1/2. Catalyzes the transfer of a ribosyl phosphate group from 5-phosphoribose 1-diphosphate to orotate, leading to the formation of orotidine monophosphate (OMP). The polypeptide is Orotate phosphoribosyltransferase (Novosphingobium aromaticivorans (strain ATCC 700278 / DSM 12444 / CCUG 56034 / CIP 105152 / NBRC 16084 / F199)).